Consider the following 447-residue polypeptide: N-succinylarginine dihydrolase (447 aa).

Substrate contacts are provided by residues 19 to 28 (AGLSFGNEAS), Asn-110, and 137 to 138 (HR). Glu-174 is an active-site residue. Residue Arg-212 coordinates substrate. His-248 is an active-site residue. Substrate contacts are provided by Asp-250 and Asn-359. Cys-365 serves as the catalytic Nucleophile.

The protein belongs to the succinylarginine dihydrolase family. Homodimer.

It catalyses the reaction N(2)-succinyl-L-arginine + 2 H2O + 2 H(+) = N(2)-succinyl-L-ornithine + 2 NH4(+) + CO2. It participates in amino-acid degradation; L-arginine degradation via AST pathway; L-glutamate and succinate from L-arginine: step 2/5. Catalyzes the hydrolysis of N(2)-succinylarginine into N(2)-succinylornithine, ammonia and CO(2). This chain is N-succinylarginine dihydrolase, found in Escherichia coli O81 (strain ED1a).